A 319-amino-acid chain; its full sequence is MLVSDRDKLEDKALIPLDNIFHNGKGTLVQASVTSVEKEKTGGFVVLDNGEKLPFYVLVVATGSKWSGPVDFPSKPEDVTKWISEQRKKFKDAKNIVIAGGGSVGLELSGEIKDIWPEKSVTIVHSQKKLLNSVYPDKFRDRAAQAYRPRTKLVLDDQIPGELTPGATSVTTRNGKTITADLIVPAWGNKPNTALLSSLKDVLSPNGCVKIRDTFQTQAYPDIFALGDIIDVNEQKQAGKAQAHAGMVAANVLSYVQGQPLKQKYKGSYELIVITNGKNDGVGYFGVWWGIVIGGWLASLLKAKDLMLPATRVATGASK.

Residues Arg6, Asp18, and Lys25 each contribute to the FAD site. Lys129 and Gly188 together coordinate NAD(+). Residues Lys129 and Gly188 each coordinate NADP(+). Residues Asp228 and Tyr265 each coordinate FAD. Asp228 lines the 6-hydroxy-FAD pocket. NAD(+) is bound at residue Tyr265. Tyr265 serves as a coordination point for NADP(+). The chain crosses the membrane as a helical span at residues Gly281–Leu301.

Belongs to the FAD-dependent oxidoreductase family.

It is found in the membrane. Its function is as follows. Probable FAD-dependent oxidoreductase that plays a role in the regulation of fruiting body development. The protein is FAD-dependent oxidoreductase FVFD30 of Flammulina velutipes (Agaricus velutipes).